The chain runs to 221 residues: 7-cyano-7-deazaguanine synthase (221 aa).

9 to 19 contacts ATP; sequence YSGGMDSFTLL. Residues Cys185, Cys193, Cys196, and Cys199 each coordinate Zn(2+).

It belongs to the QueC family. Zn(2+) is required as a cofactor.

It carries out the reaction 7-carboxy-7-deazaguanine + NH4(+) + ATP = 7-cyano-7-deazaguanine + ADP + phosphate + H2O + H(+). Its pathway is purine metabolism; 7-cyano-7-deazaguanine biosynthesis. Catalyzes the ATP-dependent conversion of 7-carboxy-7-deazaguanine (CDG) to 7-cyano-7-deazaguanine (preQ(0)). This chain is 7-cyano-7-deazaguanine synthase, found in Marinobacter nauticus (strain ATCC 700491 / DSM 11845 / VT8) (Marinobacter aquaeolei).